The sequence spans 140 residues: Natriuretic peptides A (140 aa).

The signal sequence occupies residues 1–24; that stretch reads MDTRGSFSCGFLLLLLIQLQPSRA. Positions 25 to 111 are excised as a propeptide; it reads NPIYNLSPAK…KRLRGVQMPR (87 aa). A disordered region spans residues 55–94; that stretch reads ALESNPDLQEPQTQEEIPPELTDDSDEQKAEPKLASNTPL. Residues 71-80 show a composition bias toward acidic residues; sequence IPPELTDDSD. Cysteine 118 and cysteine 134 are disulfide-bonded.

This sequence belongs to the natriuretic peptide family. Post-translationally, cleaved by CORIN upon secretion to produce the functional hormone.

It localises to the secreted. Hormone playing a key role in cardiovascular homeostasis through regulation of natriuresis, diuresis, and vasodilation. Specifically binds and stimulates the cGMP production of the NPR1 receptor. Binds the clearance receptor NPR3. The sequence is that of Natriuretic peptides A (NPPA) from Gallus gallus (Chicken).